A 345-amino-acid chain; its full sequence is Ribonucleoside-diphosphate reductase subunit beta (345 aa).

Fe cation-binding residues include Asp-88, Glu-118, and His-121. Residue Tyr-125 is part of the active site. Fe cation is bound by residues Glu-185, Glu-219, and His-222.

Belongs to the ribonucleoside diphosphate reductase small chain family. In terms of assembly, tetramer of two alpha and two beta subunits. The cofactor is Fe cation.

The enzyme catalyses a 2'-deoxyribonucleoside 5'-diphosphate + [thioredoxin]-disulfide + H2O = a ribonucleoside 5'-diphosphate + [thioredoxin]-dithiol. Functionally, provides the precursors necessary for DNA synthesis. Catalyzes the biosynthesis of deoxyribonucleotides from the corresponding ribonucleotides. The polypeptide is Ribonucleoside-diphosphate reductase subunit beta (nrdB) (Halalkalibacterium halodurans (strain ATCC BAA-125 / DSM 18197 / FERM 7344 / JCM 9153 / C-125) (Bacillus halodurans)).